The following is a 632-amino-acid chain: Tail spike protein (632 aa).

In terms of domain architecture, Peptidase S74 spans 505 to 630; the sequence is SDARCKTEPL…KRMQEALAAL (126 aa).

In terms of assembly, homotrimer. In terms of processing, proteolytic cleavage and release of the chaperone in the host cytosol stabilizes the folded protein. The cleavage gives rise to the mature tail spike protein but is not essential for catalytic activity.

The protein resides in the virion. Functions as a receptor binding protein (RBP) and probably mediates the attachment to the host capsular exopolysaccharides. Displays a depolymerase activity that specifically degrades the K5-type polysaccharides of Escherichia coli capsule. In terms of biological role, the C-terminal chaperone protein mediates homotrimerization and proper folding of the catalytic trimer. The protein is Tail spike protein (kflA) of Escherichia virus K5 (Bacteriophage K5).